Consider the following 346-residue polypeptide: N-acetyl-gamma-glutamyl-phosphate reductase (346 aa).

Cysteine 150 is a catalytic residue.

This sequence belongs to the NAGSA dehydrogenase family. Type 1 subfamily.

It is found in the cytoplasm. The catalysed reaction is N-acetyl-L-glutamate 5-semialdehyde + phosphate + NADP(+) = N-acetyl-L-glutamyl 5-phosphate + NADPH + H(+). Its pathway is amino-acid biosynthesis; L-arginine biosynthesis; N(2)-acetyl-L-ornithine from L-glutamate: step 3/4. In terms of biological role, catalyzes the NADPH-dependent reduction of N-acetyl-5-glutamyl phosphate to yield N-acetyl-L-glutamate 5-semialdehyde. The chain is N-acetyl-gamma-glutamyl-phosphate reductase from Brevibacillus brevis (strain 47 / JCM 6285 / NBRC 100599).